We begin with the raw amino-acid sequence, 155 residues long: Conopressin/neurophysin (155 aa).

Residues 1–26 (MMSSLCGMPLTYLLTAAVLSLSLTDA) form the signal peptide. Residues C27 and C32 are joined by a disulfide bond. G35 bears the Glycine amide mark. Disulfide bonds link C50–C94, C53–C67, C61–C84, C68–C74, C101–C115, C109–C127, and C116–C121. N-linked (GlcNAc...) asparagine glycosylation is present at N88.

Belongs to the vasopressin/oxytocin family. In terms of processing, seven disulfide bonds are present in neurophysin.

The protein resides in the secreted. This Lymnaea stagnalis (Great pond snail) protein is Conopressin/neurophysin.